An 80-amino-acid chain; its full sequence is Cell division protein ZapB (80 aa).

The stretch at F3 to E80 forms a coiled coil.

Belongs to the ZapB family. In terms of assembly, homodimer. The ends of the coiled-coil dimer bind to each other, forming polymers. Interacts with FtsZ.

It localises to the cytoplasm. Functionally, non-essential, abundant cell division factor that is required for proper Z-ring formation. It is recruited early to the divisome by direct interaction with FtsZ, stimulating Z-ring assembly and thereby promoting cell division earlier in the cell cycle. Its recruitment to the Z-ring requires functional FtsA or ZipA. The sequence is that of Cell division protein ZapB from Vibrio vulnificus (strain CMCP6).